Here is a 100-residue protein sequence, read N- to C-terminus: Nucleoid-associated protein ckrop_0143 (100 aa).

It belongs to the YbaB/EbfC family. Homodimer.

It localises to the cytoplasm. Its subcellular location is the nucleoid. Binds to DNA and alters its conformation. May be involved in regulation of gene expression, nucleoid organization and DNA protection. The protein is Nucleoid-associated protein ckrop_0143 of Corynebacterium kroppenstedtii (strain DSM 44385 / JCM 11950 / CIP 105744 / CCUG 35717).